The following is a 602-amino-acid chain: Elongation factor 4 (602 aa).

The region spanning Asp6–Lys188 is the tr-type G domain. GTP is bound by residues Asp18–Thr23 and Asn135–Asp138.

The protein belongs to the TRAFAC class translation factor GTPase superfamily. Classic translation factor GTPase family. LepA subfamily.

It is found in the cell inner membrane. The catalysed reaction is GTP + H2O = GDP + phosphate + H(+). Functionally, required for accurate and efficient protein synthesis under certain stress conditions. May act as a fidelity factor of the translation reaction, by catalyzing a one-codon backward translocation of tRNAs on improperly translocated ribosomes. Back-translocation proceeds from a post-translocation (POST) complex to a pre-translocation (PRE) complex, thus giving elongation factor G a second chance to translocate the tRNAs correctly. Binds to ribosomes in a GTP-dependent manner. The sequence is that of Elongation factor 4 from Brucella melitensis biotype 2 (strain ATCC 23457).